Here is a 249-residue protein sequence, read N- to C-terminus: DNA repair protein RecO (249 aa).

It belongs to the RecO family.

In terms of biological role, involved in DNA repair and RecF pathway recombination. This chain is DNA repair protein RecO, found in Lactobacillus delbrueckii subsp. bulgaricus (strain ATCC 11842 / DSM 20081 / BCRC 10696 / JCM 1002 / NBRC 13953 / NCIMB 11778 / NCTC 12712 / WDCM 00102 / Lb 14).